Consider the following 429-residue polypeptide: Enolase (429 aa).

Gln-167 is a (2R)-2-phosphoglycerate binding site. The active-site Proton donor is the Glu-209. The Mg(2+) site is built by Asp-246, Glu-289, and Asp-316. Positions 341, 370, 371, and 392 each coordinate (2R)-2-phosphoglycerate. The Proton acceptor role is filled by Lys-341.

It belongs to the enolase family. Component of the RNA degradosome, a multiprotein complex involved in RNA processing and mRNA degradation. Mg(2+) is required as a cofactor.

The protein localises to the cytoplasm. It localises to the secreted. The protein resides in the cell surface. The catalysed reaction is (2R)-2-phosphoglycerate = phosphoenolpyruvate + H2O. The protein operates within carbohydrate degradation; glycolysis; pyruvate from D-glyceraldehyde 3-phosphate: step 4/5. In terms of biological role, catalyzes the reversible conversion of 2-phosphoglycerate (2-PG) into phosphoenolpyruvate (PEP). It is essential for the degradation of carbohydrates via glycolysis. This chain is Enolase, found in Pseudomonas entomophila (strain L48).